A 493-amino-acid chain; its full sequence is tRNA(Ile)-lysidine synthase, chloroplastic (493 aa).

An ATP-binding site is contributed by 68–73 (SGGQDS).

The protein belongs to the tRNA(Ile)-lysidine synthase family.

It localises to the plastid. The protein resides in the chloroplast. The enzyme catalyses cytidine(34) in tRNA(Ile2) + L-lysine + ATP = lysidine(34) in tRNA(Ile2) + AMP + diphosphate + H(+). Ligates lysine onto the cytidine present at position 34 of the AUA codon-specific tRNA(Ile) that contains the anticodon CAU, in an ATP-dependent manner. Cytidine is converted to lysidine, thus changing the amino acid specificity of the tRNA from methionine to isoleucine. The chain is tRNA(Ile)-lysidine synthase, chloroplastic from Staurastrum punctulatum (Green alga).